The following is a 180-amino-acid chain: Large ribosomal subunit protein uL5 (180 aa).

It belongs to the universal ribosomal protein uL5 family. As to quaternary structure, part of the 50S ribosomal subunit; part of the 5S rRNA/L5/L18/L25 subcomplex. Contacts the 5S rRNA and the P site tRNA. Forms a bridge to the 30S subunit in the 70S ribosome.

Functionally, this is one of the proteins that bind and probably mediate the attachment of the 5S RNA into the large ribosomal subunit, where it forms part of the central protuberance. In the 70S ribosome it contacts protein S13 of the 30S subunit (bridge B1b), connecting the 2 subunits; this bridge is implicated in subunit movement. Contacts the P site tRNA; the 5S rRNA and some of its associated proteins might help stabilize positioning of ribosome-bound tRNAs. This chain is Large ribosomal subunit protein uL5, found in Lactobacillus helveticus (strain DPC 4571).